The sequence spans 266 residues: Zinc transporter ZupT (266 aa).

The next 8 helical transmembrane spans lie at 8–28, 35–55, 70–90, 123–143, 152–172, 185–205, 209–229, and 246–266; these read LALT…ALMV, FLTF…FVEI, HAAG…IWLI, GIFT…AVFF, GVVI…AVAV, FSYS…GYAL, FLSP…MVYI, and IAIS…LMLA. 2 residues coordinate Fe(2+): Asn-134 and Glu-137. Residues Glu-137 and His-162 each coordinate Zn(2+). Residues Asn-163, Glu-166, and Glu-195 each coordinate Fe(2+). A Zn(2+)-binding site is contributed by Glu-166.

This sequence belongs to the ZIP transporter (TC 2.A.5) family. ZupT subfamily.

It localises to the cell inner membrane. It carries out the reaction Zn(2+)(in) = Zn(2+)(out). Functionally, mediates zinc uptake. May also transport other divalent cations. The polypeptide is Zinc transporter ZupT (Chlorobium limicola (strain DSM 245 / NBRC 103803 / 6330)).